The chain runs to 450 residues: uncharacterized protein (450 aa).

The region spanning 1-58 (MAKGEIVTVKIEEMDFKGYGVGYCEGKPLKVRGGILGQRVAVRVKKGKKGRAEGEIVE) is the TRAM domain. Cys-71, Cys-77, Cys-80, and Cys-159 together coordinate [4Fe-4S] cluster. Residues Gln-285, Tyr-314, Glu-335, and Asp-380 each contribute to the S-adenosyl-L-methionine site. The active-site Nucleophile is Cys-407.

Belongs to the class I-like SAM-binding methyltransferase superfamily. RNA M5U methyltransferase family.

This is an uncharacterized protein from Caldanaerobacter subterraneus subsp. tengcongensis (strain DSM 15242 / JCM 11007 / NBRC 100824 / MB4) (Thermoanaerobacter tengcongensis).